An 874-amino-acid chain; its full sequence is Alanine--tRNA ligase (874 aa).

Zn(2+) is bound by residues H562, H566, C664, and H668.

It belongs to the class-II aminoacyl-tRNA synthetase family. The cofactor is Zn(2+).

Its subcellular location is the cytoplasm. It catalyses the reaction tRNA(Ala) + L-alanine + ATP = L-alanyl-tRNA(Ala) + AMP + diphosphate. In terms of biological role, catalyzes the attachment of alanine to tRNA(Ala) in a two-step reaction: alanine is first activated by ATP to form Ala-AMP and then transferred to the acceptor end of tRNA(Ala). Also edits incorrectly charged Ser-tRNA(Ala) and Gly-tRNA(Ala) via its editing domain. The polypeptide is Alanine--tRNA ligase (Shewanella loihica (strain ATCC BAA-1088 / PV-4)).